Consider the following 160-residue polypeptide: Heme transporter hrg-5 (160 aa).

A helical transmembrane segment spans residues 21 to 41 (IALTILDILIGFSNILSYAIQ). N-linked (GlcNAc...) asparagine glycosylation is present at Asn-44. The next 3 membrane-spanning stretches (helical) occupy residues 47-67 (ALTL…MFLA), 89-109 (ITLG…AGVT), and 123-142 (FTGL…ALLA). The N-linked (GlcNAc...) asparagine glycan is linked to Asn-144.

The protein belongs to the HRG family.

It localises to the membrane. Its function is as follows. Heme transporter. The polypeptide is Heme transporter hrg-5 (hrg-5) (Caenorhabditis elegans).